The chain runs to 866 residues: FHIP family protein v1g243165 (866 aa).

Disordered regions lie at residues 739 to 761 and 781 to 814; these read RDGP…ASTS and GSTA…ESQT. Residues 751–761 show a composition bias toward low complexity; the sequence is SIGSIGSASTS.

The protein belongs to the FHIP family.

The chain is FHIP family protein v1g243165 from Nematostella vectensis (Starlet sea anemone).